An 84-amino-acid polypeptide reads, in one-letter code: UPF0729 protein F18A11.3 (84 aa).

Residues 1–21 (MVCLPCIFLPIMMAIYMKFIM) traverse the membrane as a helical segment.

Belongs to the UPF0729 family.

It is found in the cell membrane. The polypeptide is UPF0729 protein F18A11.3 (Caenorhabditis elegans).